The chain runs to 298 residues: uncharacterized protein (298 aa).

The 102-residue stretch at 194-295 (KRLNTALIAI…QLSPSQYRKS (102 aa)) folds into the HTH araC/xylS-type domain. 2 consecutive DNA-binding regions (H-T-H motif) follow at residues 214-235 (EQLA…QQHI) and 262-285 (VLAI…KNYY).

This is an uncharacterized protein from Haemophilus influenzae (strain ATCC 51907 / DSM 11121 / KW20 / Rd).